Here is a 293-residue protein sequence, read N- to C-terminus: Methylsterol monooxygenase 1 (293 aa).

2 helical membrane-spanning segments follow: residues 55-75 (LIVH…FQFI) and 100-120 (GILF…YYFT). One can recognise a Fatty acid hydroxylase domain in the interval 144-274 (GCAVIEDTWH…FTWWDRIFGT (131 aa)). The Histidine box-1 signature appears at 157–161 (HRLLH). The short motif at 170 to 174 (HKVHH) is the Histidine box-2 element. Residues 199–219 (FFIGIVLLCDHVILLWAWVTM) traverse the membrane as a helical segment. The short motif at 249 to 255 (HHDFHHM) is the Histidine box-3 element.

The protein belongs to the sterol desaturase family. Requires Fe cation as cofactor. Post-translationally, ubiquitinated by MARCHF6, leading to proteasomal degradation.

Its subcellular location is the endoplasmic reticulum membrane. It catalyses the reaction 4,4-dimethyl-5alpha-cholest-7-en-3beta-ol + 6 Fe(II)-[cytochrome b5] + 3 O2 + 5 H(+) = 4alpha-carboxy-4beta-methyl-5alpha-cholest-7-ene-3beta-ol + 6 Fe(III)-[cytochrome b5] + 4 H2O. The enzyme catalyses 4,4-dimethyl-5alpha-cholesta-8,24-dien-3beta-ol + 6 Fe(II)-[cytochrome b5] + 3 O2 + 5 H(+) = 4beta-methylzymosterol-4alpha-carboxylate + 6 Fe(III)-[cytochrome b5] + 4 H2O. It carries out the reaction 4alpha-methylzymosterol + 6 Fe(II)-[cytochrome b5] + 3 O2 + 5 H(+) = 4alpha-carboxyzymosterol + 6 Fe(III)-[cytochrome b5] + 4 H2O. The catalysed reaction is 4alpha-methyl-5alpha-cholest-7-en-3beta-ol + 6 Fe(II)-[cytochrome b5] + 3 O2 + 5 H(+) = 4alpha-carboxy-5alpha-cholest-7-en-3beta-ol + 6 Fe(III)-[cytochrome b5] + 4 H2O. It catalyses the reaction 4,4-dimethyl-5alpha-cholest-8-en-3beta-ol + 6 Fe(II)-[cytochrome b5] + 3 O2 + 5 H(+) = 4alpha-carboxy-4beta-methyl-5alpha-cholest-8-en-3beta-ol + 6 Fe(III)-[cytochrome b5] + 4 H2O. The enzyme catalyses 4alpha-methyl-5alpha-cholest-8-en-3beta-ol + 6 Fe(II)-[cytochrome b5] + 3 O2 + 5 H(+) = 4alpha-carboxy-5alpha-cholest-8-ene-3beta-ol + 6 Fe(III)-[cytochrome b5] + 4 H2O. It participates in steroid biosynthesis; zymosterol biosynthesis; zymosterol from lanosterol: step 3/6. It functions in the pathway steroid biosynthesis; cholesterol biosynthesis. Its function is as follows. Catalyzes the three-step monooxygenation required for the demethylation of 4,4-dimethyl and 4alpha-methylsterols, which can be subsequently metabolized to cholesterol. The protein is Methylsterol monooxygenase 1 (Msmo1) of Rattus norvegicus (Rat).